The primary structure comprises 228 residues: 2-hydroxy-3-keto-5-methylthiopentenyl-1-phosphate phosphatase (228 aa).

The protein belongs to the HAD-like hydrolase superfamily. MtnX family.

It catalyses the reaction 2-hydroxy-5-methylsulfanyl-3-oxopent-1-enyl phosphate + H2O = 1,2-dihydroxy-5-(methylsulfanyl)pent-1-en-3-one + phosphate. The protein operates within amino-acid biosynthesis; L-methionine biosynthesis via salvage pathway; L-methionine from S-methyl-5-thio-alpha-D-ribose 1-phosphate: step 4/6. Its function is as follows. Dephosphorylates 2-hydroxy-3-keto-5-methylthiopentenyl-1-phosphate (HK-MTPenyl-1-P) yielding 1,2-dihydroxy-3-keto-5-methylthiopentene (DHK-MTPene). This Lysinibacillus sphaericus (strain C3-41) protein is 2-hydroxy-3-keto-5-methylthiopentenyl-1-phosphate phosphatase.